The following is a 597-amino-acid chain: Sulfite reductase [NADPH] flavoprotein alpha-component (597 aa).

A Flavodoxin-like domain is found at 62–200 (VTVLSASQTG…TADKWIQDVV (139 aa)). Residues 68–73 (SQTGNA), 115–118 (STQG), and 151–160 (LGDTSYPNFC) each bind FMN. Residues 232–446 (ENPYTAKLIT…VEPNDNFRLP (215 aa)) form the FAD-binding FR-type domain. Residues Thr320, Asn354, 384–387 (RLYS), 402–404 (SVG), and 417–420 (GVAS) each bind FAD. NADP(+) is bound by residues 517 to 518 (SR), 523 to 527 (KIYVQ), and Asp559. Tyr597 serves as a coordination point for FAD.

This sequence belongs to the NADPH-dependent sulphite reductase flavoprotein subunit CysJ family. The protein in the N-terminal section; belongs to the flavodoxin family. In the C-terminal section; belongs to the flavoprotein pyridine nucleotide cytochrome reductase family. As to quaternary structure, alpha(8)-beta(8). The alpha component is a flavoprotein, the beta component is a hemoprotein. Requires FAD as cofactor. FMN serves as cofactor.

The catalysed reaction is hydrogen sulfide + 3 NADP(+) + 3 H2O = sulfite + 3 NADPH + 4 H(+). Its pathway is sulfur metabolism; hydrogen sulfide biosynthesis; hydrogen sulfide from sulfite (NADPH route): step 1/1. Component of the sulfite reductase complex that catalyzes the 6-electron reduction of sulfite to sulfide. This is one of several activities required for the biosynthesis of L-cysteine from sulfate. The flavoprotein component catalyzes the electron flow from NADPH -&gt; FAD -&gt; FMN to the hemoprotein component. This chain is Sulfite reductase [NADPH] flavoprotein alpha-component, found in Mannheimia succiniciproducens (strain KCTC 0769BP / MBEL55E).